We begin with the raw amino-acid sequence, 593 residues long: Eukaryotic peptide chain release factor subunit 1 (593 aa).

Belongs to the eukaryotic release factor 1 family. As to quaternary structure, heterodimer of two subunits, one of which binds GTP.

It is found in the cytoplasm. In terms of biological role, directs the termination of nascent peptide synthesis (translation) in response to the termination codons UAA, UAG and UGA. This is Eukaryotic peptide chain release factor subunit 1 from Caenorhabditis elegans.